The primary structure comprises 376 residues: Pulmonary surfactant-associated protein B (376 aa).

Residues 1–24 form the signal peptide; that stretch reads MAKLHLQWLLLLPTLCSLGAATES. In terms of domain architecture, Saposin A-type spans 25-63; the sequence is ASSPDCAQGPKFWCQSLEQAIQCRALGHCLQEVWGHAGA. A propeptide spanning residues 25-190 is cleaved from the precursor; it reads ASSPDCAQGP…PHTQDLSEQQ (166 aa). Saposin B-type domains follow at residues 63 to 145, 194 to 271, and 290 to 365; these read ANDL…PLGQ, PLPF…STAD, and QDTE…EAPA. 9 disulfides stabilise this stretch: cysteine 67–cysteine 141, cysteine 70–cysteine 135, cysteine 98–cysteine 110, cysteine 198–cysteine 267, cysteine 201–cysteine 261, cysteine 225–cysteine 236, cysteine 294–cysteine 361, cysteine 297–cysteine 355, and cysteine 320–cysteine 330. Residues 270–376 constitute a propeptide that is removed on maturation; it reads ADAIGPALPA…PLQCFQTPHL (107 aa). An N-linked (GlcNAc...) asparagine glycan is attached at asparagine 306.

In terms of assembly, homodimer; disulfide-linked.

The protein localises to the secreted. Its subcellular location is the extracellular space. It is found in the surface film. In terms of biological role, pulmonary surfactant-associated proteins promote alveolar stability by lowering the surface tension at the air-liquid interface in the peripheral air spaces. SP-B increases the collapse pressure of palmitic acid to nearly 70 millinewtons per meter. The sequence is that of Pulmonary surfactant-associated protein B (Sftpb) from Rattus norvegicus (Rat).